A 473-amino-acid chain; its full sequence is Photosystem II CP43 reaction center protein (473 aa).

Residues 1–14 (MKILYSLRRFYHVE) constitute a propeptide that is removed on maturation. Threonine 15 carries the N-acetylthreonine modification. The residue at position 15 (threonine 15) is a Phosphothreonine. The next 5 helical transmembrane spans lie at 69-93 (LFEV…PHLA), 134-155 (LLGP…KDRN), 178-200 (KALY…RKIT), 255-275 (KPFA…LSYS), and 291-312 (WFNN…ASQA). A [CaMn4O5] cluster-binding site is contributed by glutamate 367. A helical membrane pass occupies residues 447–471 (RARAAAAGFEKGIDRDLEPVLYMTP).

This sequence belongs to the PsbB/PsbC family. PsbC subfamily. As to quaternary structure, PSII is composed of 1 copy each of membrane proteins PsbA, PsbB, PsbC, PsbD, PsbE, PsbF, PsbH, PsbI, PsbJ, PsbK, PsbL, PsbM, PsbT, PsbX, PsbY, PsbZ, Psb30/Ycf12, at least 3 peripheral proteins of the oxygen-evolving complex and a large number of cofactors. It forms dimeric complexes. The cofactor is Binds multiple chlorophylls and provides some of the ligands for the Ca-4Mn-5O cluster of the oxygen-evolving complex. It may also provide a ligand for a Cl- that is required for oxygen evolution. PSII binds additional chlorophylls, carotenoids and specific lipids..

The protein localises to the plastid. It localises to the chloroplast thylakoid membrane. In terms of biological role, one of the components of the core complex of photosystem II (PSII). It binds chlorophyll and helps catalyze the primary light-induced photochemical processes of PSII. PSII is a light-driven water:plastoquinone oxidoreductase, using light energy to abstract electrons from H(2)O, generating O(2) and a proton gradient subsequently used for ATP formation. The sequence is that of Photosystem II CP43 reaction center protein from Oryza nivara (Indian wild rice).